Consider the following 1063-residue polypeptide: Integrin alpha-8 (1063 aa).

Positions 1–38 (MSPGASRGPRGSQAPLIAPLCCAAAALGMLLWSPACQA) are cleaved as a signal peptide. Over 39-1012 (FNLDVEKLTV…TPNVSFSIPL (974 aa)) the chain is Extracellular. 7 FG-GAP repeats span residues 44–105 (EKLT…GSAQ), 122–183 (NGTK…AYAE), 188–240 (RNSN…IANY), 253–306 (KQTE…STDM), 307–372 (TFIQ…LLFR), 373–431 (DPQI…GLNT), and 435–498 (QVLQ…LHPM). Asparagine 81 carries an N-linked (GlcNAc...) asparagine glycan. The cysteines at positions 96 and 106 are disulfide-linked. Asparagine 122 is a glycosylation site (N-linked (GlcNAc...) asparagine). Cysteine 150 and cysteine 171 form a disulfide bridge. Asparagine 177 carries an N-linked (GlcNAc...) asparagine glycan. Cysteine 187 and cysteine 200 are joined by a disulfide. Residue asparagine 239 is glycosylated (N-linked (GlcNAc...) asparagine). Glutamate 275, threonine 277, aspartate 279, and glutamate 283 together coordinate Ca(2+). Asparagine 302 and asparagine 311 each carry an N-linked (GlcNAc...) asparagine glycan. Residues aspartate 329, asparagine 331, aspartate 333, leucine 335, aspartate 337, aspartate 395, asparagine 397, aspartate 399, tyrosine 401, and aspartate 403 each coordinate Ca(2+). A Cell attachment site motif is present at residues 455-457 (RGD). Ca(2+) is bound by residues aspartate 459, aspartate 461, asparagine 463, tyrosine 465, and aspartate 467. Asparagine 504 carries an N-linked (GlcNAc...) asparagine glycan. Cystine bridges form between cysteine 507-cysteine 518 and cysteine 524-cysteine 580. N-linked (GlcNAc...) asparagine glycans are attached at residues asparagine 601 and asparagine 605. Intrachain disulfides connect cysteine 641–cysteine 647 and cysteine 713–cysteine 726. Asparagine 719, asparagine 737, asparagine 753, asparagine 780, asparagine 896, and asparagine 923 each carry an N-linked (GlcNAc...) asparagine glycan. 2 cysteine pairs are disulfide-bonded: cysteine 867-cysteine 924 and cysteine 929-cysteine 934. Residue asparagine 1005 is glycosylated (N-linked (GlcNAc...) asparagine). Residues 1013–1033 (WVIILAILLGLLVLAILTLAL) form a helical membrane-spanning segment. The Cytoplasmic segment spans residues 1034-1063 (WKCGFFDRARPPQEDMTDREQLTNDKTPEA).

The protein belongs to the integrin alpha chain family. As to quaternary structure, heterodimer of an alpha and a beta subunit. The alpha subunit is composed of a heavy and a light chain linked by a disulfide bond. Alpha-8 associates with beta-1. Expressed in mesenchymal cells, including alveolar myofibroblasts, kidney mesangial cells and hepatic stellar cells and vascular and visceral smooth muscle (at protein level).

The protein resides in the membrane. Its subcellular location is the cell membrane. Integrin alpha-8/beta-1 functions in the genesis of kidney and probably of other organs by regulating the recruitment of mesenchymal cells into epithelial structures. It recognizes the sequence R-G-D in a wide array of ligands including TNC, FN1, SPP1 TGFB1, TGFB3 and VTN. NPNT is probably its functional ligand in kidney genesis. Neuronal receptor for TNC it mediates cell-cell interactions and regulates neurite outgrowth of sensory and motor neurons. In Homo sapiens (Human), this protein is Integrin alpha-8 (ITGA8).